The chain runs to 367 residues: Putative C-&gt;U-editing enzyme APOBEC-4 (367 aa).

The CMP/dCMP-type deaminase domain maps to 61–177 (PQTKHLTFYE…AWNREALRSL (117 aa)). Zn(2+) is bound at residue histidine 93. Glutamate 95 acts as the Proton donor in catalysis. 2 residues coordinate Zn(2+): cysteine 127 and cysteine 134.

It belongs to the cytidine and deoxycytidylate deaminase family. Zn(2+) is required as a cofactor. In terms of tissue distribution, predominantly expressed in testis.

In terms of biological role, putative C to U editing enzyme whose physiological substrate is not yet known. This is Putative C-&gt;U-editing enzyme APOBEC-4 (APOBEC4) from Homo sapiens (Human).